We begin with the raw amino-acid sequence, 296 residues long: Ribosomal RNA small subunit methyltransferase A (296 aa).

S-adenosyl-L-methionine is bound by residues Asn-31, Leu-33, Gly-58, Glu-79, Asp-111, and Asn-136.

It belongs to the class I-like SAM-binding methyltransferase superfamily. rRNA adenine N(6)-methyltransferase family. RsmA subfamily.

The protein resides in the cytoplasm. The catalysed reaction is adenosine(1518)/adenosine(1519) in 16S rRNA + 4 S-adenosyl-L-methionine = N(6)-dimethyladenosine(1518)/N(6)-dimethyladenosine(1519) in 16S rRNA + 4 S-adenosyl-L-homocysteine + 4 H(+). Its function is as follows. Specifically dimethylates two adjacent adenosines (A1518 and A1519) in the loop of a conserved hairpin near the 3'-end of 16S rRNA in the 30S particle. May play a critical role in biogenesis of 30S subunits. This Lactobacillus johnsonii (strain CNCM I-12250 / La1 / NCC 533) protein is Ribosomal RNA small subunit methyltransferase A.